The chain runs to 474 residues: 3-isopropylmalate dehydratase large subunit (474 aa).

The [4Fe-4S] cluster site is built by Cys-353, Cys-414, and Cys-417.

It belongs to the aconitase/IPM isomerase family. LeuC type 1 subfamily. In terms of assembly, heterodimer of LeuC and LeuD. The cofactor is [4Fe-4S] cluster.

It carries out the reaction (2R,3S)-3-isopropylmalate = (2S)-2-isopropylmalate. It participates in amino-acid biosynthesis; L-leucine biosynthesis; L-leucine from 3-methyl-2-oxobutanoate: step 2/4. Its function is as follows. Catalyzes the isomerization between 2-isopropylmalate and 3-isopropylmalate, via the formation of 2-isopropylmaleate. This is 3-isopropylmalate dehydratase large subunit from Teredinibacter turnerae (strain ATCC 39867 / T7901).